A 253-amino-acid chain; its full sequence is Tetraspanin-3 (253 aa).

The Cytoplasmic segment spans residues 1-11 (MGQCGITSSKT). The helical transmembrane segment at 12-32 (VLVFLNLIFWGAAGILCYVGA) threads the bilayer. The Extracellular segment spans residues 33–50 (YVFITYDDYDHFFEDVYT). A helical membrane pass occupies residues 51 to 71 (LFPAVVIIAVGALLFIIGLIG). The Cytoplasmic portion of the chain corresponds to 72-85 (CCATIRESRCGLAT). The helical transmembrane segment at 86-106 (FVFILLLVFVTEVVVVVLGYV) threads the bilayer. Residues 107–212 (YRAKVENEVD…KKLQEILMHV (106 aa)) lie on the Extracellular side of the membrane. N-linked (GlcNAc...) asparagine glycans are attached at residues Asn-127, Asn-152, Asn-167, and Asn-183. A helical transmembrane segment spans residues 213–233 (IWAALAFAAIQLLGMLCACIV). Over 234 to 253 (LCRRSRDPAYELLITGGTYA) the chain is Cytoplasmic.

This sequence belongs to the tetraspanin (TM4SF) family. As to quaternary structure, interacts with claudin-11/CLDN11 and integrins.

It localises to the membrane. Regulates the proliferation and migration of oligodendrocytes, a process essential for normal myelination and repair. The polypeptide is Tetraspanin-3 (Tspan3) (Mus musculus (Mouse)).